Consider the following 405-residue polypeptide: L-rhamnonate dehydratase (405 aa).

Residues histidine 33 and arginine 59 each coordinate substrate. Aspartate 226, glutamate 252, and glutamate 280 together coordinate Mg(2+). Histidine 329 functions as the Proton acceptor in the catalytic mechanism. Glutamate 349 is a binding site for substrate.

The protein belongs to the mandelate racemase/muconate lactonizing enzyme family. RhamD subfamily. In terms of assembly, homooctamer; tetramer of dimers. Requires Mg(2+) as cofactor.

It carries out the reaction L-rhamnonate = 2-dehydro-3-deoxy-L-rhamnonate + H2O. Functionally, catalyzes the dehydration of L-rhamnonate to 2-keto-3-deoxy-L-rhamnonate (KDR). This Escherichia coli O6:H1 (strain CFT073 / ATCC 700928 / UPEC) protein is L-rhamnonate dehydratase.